A 149-amino-acid chain; its full sequence is Transcriptional repressor NrdR (149 aa).

A zinc finger lies at 3-34 (CPFCGHLETQVVETRISEDAEFIRRRRQCGAC). Residues 49–139 (PSIVKKDGRR…VYRSFEDIDE (91 aa)) form the ATP-cone domain.

The protein belongs to the NrdR family. Zn(2+) is required as a cofactor.

In terms of biological role, negatively regulates transcription of bacterial ribonucleotide reductase nrd genes and operons by binding to NrdR-boxes. In Polaromonas naphthalenivorans (strain CJ2), this protein is Transcriptional repressor NrdR.